The sequence spans 157 residues: SsrA-binding protein (157 aa).

The protein belongs to the SmpB family.

The protein resides in the cytoplasm. In terms of biological role, required for rescue of stalled ribosomes mediated by trans-translation. Binds to transfer-messenger RNA (tmRNA), required for stable association of tmRNA with ribosomes. tmRNA and SmpB together mimic tRNA shape, replacing the anticodon stem-loop with SmpB. tmRNA is encoded by the ssrA gene; the 2 termini fold to resemble tRNA(Ala) and it encodes a 'tag peptide', a short internal open reading frame. During trans-translation Ala-aminoacylated tmRNA acts like a tRNA, entering the A-site of stalled ribosomes, displacing the stalled mRNA. The ribosome then switches to translate the ORF on the tmRNA; the nascent peptide is terminated with the 'tag peptide' encoded by the tmRNA and targeted for degradation. The ribosome is freed to recommence translation, which seems to be the essential function of trans-translation. The sequence is that of SsrA-binding protein from Elusimicrobium minutum (strain Pei191).